Here is a 736-residue protein sequence, read N- to C-terminus: 1,4-alpha-glucan branching enzyme GlgB (736 aa).

D417 acts as the Nucleophile in catalysis. Catalysis depends on E470, which acts as the Proton donor.

It belongs to the glycosyl hydrolase 13 family. GlgB subfamily. As to quaternary structure, monomer.

It carries out the reaction Transfers a segment of a (1-&gt;4)-alpha-D-glucan chain to a primary hydroxy group in a similar glucan chain.. It functions in the pathway glycan biosynthesis; glycogen biosynthesis. Catalyzes the formation of the alpha-1,6-glucosidic linkages in glycogen by scission of a 1,4-alpha-linked oligosaccharide from growing alpha-1,4-glucan chains and the subsequent attachment of the oligosaccharide to the alpha-1,6 position. The sequence is that of 1,4-alpha-glucan branching enzyme GlgB from Pseudomonas putida (strain ATCC 47054 / DSM 6125 / CFBP 8728 / NCIMB 11950 / KT2440).